A 152-amino-acid polypeptide reads, in one-letter code: Aspartate carbamoyltransferase regulatory chain (152 aa).

Zn(2+) is bound by residues cysteine 108, cysteine 113, cysteine 137, and cysteine 140.

This sequence belongs to the PyrI family. Contains catalytic and regulatory chains. It depends on Zn(2+) as a cofactor.

Functionally, involved in allosteric regulation of aspartate carbamoyltransferase. The protein is Aspartate carbamoyltransferase regulatory chain of Neisseria gonorrhoeae (strain ATCC 700825 / FA 1090).